The sequence spans 427 residues: MAIELGLSRITKLLEHLGNPQNSLRVLHIAGTNGKGSVCTYLSSVLQQKSYQIGKFTTPHLVHVTDSITINNKPIPLERYQNIRLQLEALNKSHSLKCTEFELLTCTAFKYFYDVQCQWCVIEVGLGGRLDATNVIPGANKACCGITKISLDHESFLGNTLSEISKEKAGIITEGVPFTVIDGTNEASVINVVKERCKALGSELSVTDSQLNGNMIDTNSWGCFDLAKLPLNGEYQIFNLRVAMGMLDYLQMNELIDITKNEVSTRLAKVDWPGRLYRMDYRFDKVSNRTVPILMDGAHNGSAAVELVKYLRKEYGNQPLTFVMAVTHGKNLEPLLQPLLRPIDQVILTRFNNVEGMPWIHATDPEEIKDFILTQGYTKEIVIENDLHQVLPSLAHVSDEQRRPIVVCGSLYLCGELLRIHNSHLRN.

Position 34 to 37 (34 to 37) interacts with ATP; it reads GKGS. Positions 123 and 153 each coordinate Mg(2+). Positions 275 and 296 each coordinate ATP.

Belongs to the folylpolyglutamate synthase family.

It is found in the cytoplasm. The catalysed reaction is 7,8-dihydropteroate + L-glutamate + ATP = 7,8-dihydrofolate + ADP + phosphate + H(+). Its pathway is cofactor biosynthesis; tetrahydrofolylpolyglutamate biosynthesis. Glutamate-adding enzyme which catalyzes the binding of the first glutamyl side chain to dihydropteroate. Leads to the de nove synthesis of tetrahydrofolate. This Saccharomyces cerevisiae (strain ATCC 204508 / S288c) (Baker's yeast) protein is Dihydrofolate synthetase (FOL3).